Consider the following 149-residue polypeptide: Deoxyuridine 5'-triphosphate nucleotidohydrolase (149 aa).

Residues 68–70, Asn-81, 85–87, and Met-95 each bind substrate; these read RSG and LID.

This sequence belongs to the dUTPase family. Mg(2+) serves as cofactor.

The enzyme catalyses dUTP + H2O = dUMP + diphosphate + H(+). Its pathway is pyrimidine metabolism; dUMP biosynthesis; dUMP from dCTP (dUTP route): step 2/2. This enzyme is involved in nucleotide metabolism: it produces dUMP, the immediate precursor of thymidine nucleotides and it decreases the intracellular concentration of dUTP so that uracil cannot be incorporated into DNA. The sequence is that of Deoxyuridine 5'-triphosphate nucleotidohydrolase from Albidiferax ferrireducens (strain ATCC BAA-621 / DSM 15236 / T118) (Rhodoferax ferrireducens).